Reading from the N-terminus, the 103-residue chain is Small ribosomal subunit protein uS10 (103 aa).

Belongs to the universal ribosomal protein uS10 family. Part of the 30S ribosomal subunit.

Functionally, involved in the binding of tRNA to the ribosomes. This is Small ribosomal subunit protein uS10 from Haemophilus ducreyi (strain 35000HP / ATCC 700724).